The chain runs to 291 residues: Phosphatidylserine decarboxylase proenzyme (291 aa).

Active-site charge relay system; for autoendoproteolytic cleavage activity residues include Asp93, His150, and Ser253. Catalysis depends on Ser253, which acts as the Schiff-base intermediate with substrate; via pyruvic acid; for decarboxylase activity. The residue at position 253 (Ser253) is a Pyruvic acid (Ser); by autocatalysis.

The protein belongs to the phosphatidylserine decarboxylase family. PSD-B subfamily. Prokaryotic type I sub-subfamily. Heterodimer of a large membrane-associated beta subunit and a small pyruvoyl-containing alpha subunit. Pyruvate serves as cofactor. In terms of processing, is synthesized initially as an inactive proenzyme. Formation of the active enzyme involves a self-maturation process in which the active site pyruvoyl group is generated from an internal serine residue via an autocatalytic post-translational modification. Two non-identical subunits are generated from the proenzyme in this reaction, and the pyruvate is formed at the N-terminus of the alpha chain, which is derived from the carboxyl end of the proenzyme. The autoendoproteolytic cleavage occurs by a canonical serine protease mechanism, in which the side chain hydroxyl group of the serine supplies its oxygen atom to form the C-terminus of the beta chain, while the remainder of the serine residue undergoes an oxidative deamination to produce ammonia and the pyruvoyl prosthetic group on the alpha chain. During this reaction, the Ser that is part of the protease active site of the proenzyme becomes the pyruvoyl prosthetic group, which constitutes an essential element of the active site of the mature decarboxylase.

The protein resides in the cell membrane. It carries out the reaction a 1,2-diacyl-sn-glycero-3-phospho-L-serine + H(+) = a 1,2-diacyl-sn-glycero-3-phosphoethanolamine + CO2. Its pathway is phospholipid metabolism; phosphatidylethanolamine biosynthesis; phosphatidylethanolamine from CDP-diacylglycerol: step 2/2. Functionally, catalyzes the formation of phosphatidylethanolamine (PtdEtn) from phosphatidylserine (PtdSer). This is Phosphatidylserine decarboxylase proenzyme from Alcanivorax borkumensis (strain ATCC 700651 / DSM 11573 / NCIMB 13689 / SK2).